Here is a 549-residue protein sequence, read N- to C-terminus: Teichoic acids export ATP-binding protein TagH (549 aa).

The region spanning 22–243 is the ABC transporter domain; sequence DKLKDLFRKQ…YRAFLKEYNQ (222 aa). An ATP-binding site is contributed by 57-64; that stretch reads GLNGSGKS. The unknown stretch occupies residues 244–549; it reads MSMEDRKKFQ…EIQSISIVKK (306 aa). The SH3b domain maps to 346-415; it reads ENMYMVKSNG…VSTKFIEPFK (70 aa).

The protein belongs to the ABC transporter superfamily. Teichoic acids exporter (TC 3.A.1.104.1) family. In terms of assembly, the complex is composed of two ATP-binding proteins (TagH) and two transmembrane proteins (TagG).

The protein localises to the cell membrane. The enzyme catalyses ATP + H2O + teichoic acidSide 1 = ADP + phosphate + teichoic acidSide 2.. Part of the ABC transporter complex TagGH involved in teichoic acids export. Responsible for energy coupling to the transport system. The polypeptide is Teichoic acids export ATP-binding protein TagH (Bacillus cereus (strain ZK / E33L)).